A 360-amino-acid polypeptide reads, in one-letter code: Photosystem II protein D1 3 (360 aa).

3 helical membrane-spanning segments follow: residues 29–46, 118–133, and 142–156; these read YVGW…TAAI, HFLI…QWEL, and WIPV…AATA. His118 lines the chlorophyll a pocket. Tyr126 serves as a coordination point for pheophytin a. Asp170 and Glu189 together coordinate [CaMn4O5] cluster. Residues 197–218 traverse the membrane as a helical segment; sequence FHMIGVAGVFGGALFSAMHGSL. Position 198 (His198) interacts with chlorophyll a. A quinone-binding positions include His215 and 264–265; that span reads SF. Fe cation is bound at residue His215. His272 is a Fe cation binding site. A helical transmembrane segment spans residues 274 to 288; it reads FLAAWPVIGIWFAAL. [CaMn4O5] cluster-binding residues include His332, Glu333, Asp342, and Ala344. Residues 345 to 360 constitute a propeptide that is removed on maturation; it reads SGEVQPIALTAPAIAS.

This sequence belongs to the reaction center PufL/M/PsbA/D family. As to quaternary structure, PSII is composed of 1 copy each of membrane proteins PsbA, PsbB, PsbC, PsbD, PsbE, PsbF, PsbH, PsbI, PsbJ, PsbK, PsbL, PsbM, PsbT, PsbX, PsbY, PsbZ, Psb30/Ycf12, peripheral proteins PsbO, CyanoQ (PsbQ), PsbU, PsbV and a large number of cofactors. It forms dimeric complexes. The cofactor is The D1/D2 heterodimer binds P680, chlorophylls that are the primary electron donor of PSII, and subsequent electron acceptors. It shares a non-heme iron and each subunit binds pheophytin, quinone, additional chlorophylls, carotenoids and lipids. D1 provides most of the ligands for the Mn4-Ca-O5 cluster of the oxygen-evolving complex (OEC). There is also a Cl(-1) ion associated with D1 and D2, which is required for oxygen evolution. The PSII complex binds additional chlorophylls, carotenoids and specific lipids.. In terms of processing, tyr-161 forms a radical intermediate that is referred to as redox-active TyrZ, YZ or Y-Z. C-terminally processed by CtpA; processing is essential to allow assembly of the oxygen-evolving complex and thus photosynthetic growth.

Its subcellular location is the cellular thylakoid membrane. It catalyses the reaction 2 a plastoquinone + 4 hnu + 2 H2O = 2 a plastoquinol + O2. Functionally, photosystem II (PSII) is a light-driven water:plastoquinone oxidoreductase that uses light energy to abstract electrons from H(2)O, generating O(2) and a proton gradient subsequently used for ATP formation. It consists of a core antenna complex that captures photons, and an electron transfer chain that converts photonic excitation into a charge separation. The D1/D2 (PsbA/PsbD) reaction center heterodimer binds P680, the primary electron donor of PSII as well as several subsequent electron acceptors. This is Photosystem II protein D1 3 from Nostoc sp. (strain PCC 7120 / SAG 25.82 / UTEX 2576).